Reading from the N-terminus, the 80-residue chain is MATLPPTAHTSQQPVNIEDEDGILDEYDQYSLAQSYVVGGGRKGRTKREAAANTNRPSPGGHERKLLTKFQNSERKKAWR.

The disordered stretch occupies residues 40-80 (GGRKGRTKREAAANTNRPSPGGHERKLLTKFQNSERKKAWR). The span at 61–80 (GHERKLLTKFQNSERKKAWR) shows a compositional bias: basic and acidic residues. Positions 64–80 (RKLLTKFQNSERKKAWR) match the Nuclear localization signal motif.

The protein belongs to the NUPR family. As to quaternary structure, monomer. Directly interacts with MSL1 and binds MORF4L1, two components of histone acetyltransferase complex; the interaction with MORF4L1 may be mediated by MSL1. Interacts with EP300; this interaction enhances the effect of EP300 on PAX2 transcription factor activity. Interacts with PAXIP1; this interaction prevents PAXIP1 inhibition of PAX2 transcription factor activity. Interacts with COPS5; this interaction allows COPS5-dependent CDKN1B nuclear to cytoplasm translocation. Interacts with RNF2. Interacts with FOXO3; this interaction represses FOXO3 transactivation. Interacts with PTMA; regulates apoptotic process. Interacts with MYOD1, EP300 and DDX5; this interaction coordinates the association of anti-proliferative and pro-myogenic proteins at the myogenin promoter. Interacts with TP53; interaction is stress-dependent. Forms a complex with EP300 and TP53; this complex binds CDKN1A promoter leading to transcriptional induction of CDKN1A. Post-translationally, phosphorylated. Phosphorylation promotes DNA-binding activity. In terms of processing, acetylated. In terms of tissue distribution, strongly activated in pancreatic acinar cells during the acute phase of pancreatitis, in developing pancreas and during pancreatic regeneration.

It is found in the nucleus. It localises to the cytoplasm. Its subcellular location is the perinuclear region. Transcription regulator that converts stress signals into a program of gene expression that empowers cells with resistance to the stress induced by a change in their microenvironment. Thereby participates in the regulation of many processes namely cell-cycle, apoptosis, autophagy and DNA repair responses. Controls cell cycle progression and protects cells from genotoxic stress induced by doxorubicin through the complex formation with TP53 and EP300 that binds CDKN1A promoter leading to transcriptional induction of CDKN1A. Protects pancreatic cancer cells from stress-induced cell death by binding the RELB promoter and activating its transcription, leading to IER3 transactivation. Negatively regulates apoptosis through interaction with PTMA. Inhibits autophagy-induced apoptosis in cardiac cells through FOXO3 interaction, inducing cytoplasmic translocation of FOXO3 thereby preventing the FOXO3 association with the pro-autophagic BNIP3 promoter. Inhibits cell growth and facilitates programmed cell death by apoptosis after adriamycin-induced DNA damage through transactivation of TP53. Regulates methamphetamine-induced apoptosis and autophagy through DDIT3-mediated endoplasmic reticulum stress pathway. Participates in DNA repair following gamma-irradiation by facilitating DNA access of the transcription machinery through interaction with MSL1 leading to inhibition of histone H4' Lys-16' acetylation (H4K16ac). Coactivator of PAX2 transcription factor activity, both by recruiting the EP300 cofactor to increase PAX2 transcription factor activity and by binding PAXIP1 to suppress PAXIP1-induced inhibition on PAX2. Positively regulates cell cycle progression through interaction with COPS5 inducing cytoplasmic translocation of CDKN1B leading to the CDKN1B degradation. Coordinates, through its interaction with EP300, the assiociation of MYOD1, EP300 and DDX5 to the MYOG promoter, leading to inhibition of cell-cycle progression and myogenic differentiation promotion. Negatively regulates beta cell proliferation via inhibition of cell-cycle regulatory genes expression through the suppression of their promoter activities. Also required for LHB expression and ovarian maturation. Exacerbates CNS inflammation and demyelination upon cuprizone treatment. This is Nuclear protein 1 from Rattus norvegicus (Rat).